Consider the following 90-residue polypeptide: [Leu8]-phyllolitorin (90 aa).

A signal peptide spans 1–30; that stretch reads MSAVPFTRVLLISGFLAHLLLSTFVTLTVC. Positions 31 to 48 are excised as a propeptide; that stretch reads KEVTEESDDLSKRNVLQR. At glutamine 49 the chain carries Pyrrolidone carboxylic acid. At methionine 57 the chain carries Methionine amide. The propeptide occupies 61 to 90; that stretch reads SLENTNRRSDEDMEISALFRGSPLKVKRSD.

Belongs to the bombesin/neuromedin-B/ranatensin family. In terms of tissue distribution, expressed by the skin glands.

It is found in the secreted. The sequence is that of [Leu8]-phyllolitorin from Phyllomedusa sauvagei (Sauvage's leaf frog).